A 417-amino-acid polypeptide reads, in one-letter code: Odorant receptor 65a (417 aa).

The Cytoplasmic portion of the chain corresponds to 1–62; it reads MTELRSERKN…MNSEQRRLPR (62 aa). The helical transmembrane segment at 63–83 threads the bilayer; the sequence is IVAWQYFVSIQLATALASLFY. The Extracellular segment spans residues 84–98; the sequence is GISESIGDIVNLGRD. A helical membrane pass occupies residues 99–119; that stretch reads LVFIITIIFICFRLVFFAQYA. Topologically, residues 120–152 are cytoplasmic; that stretch reads GELDVIIDALEDIYHWSIKGPATKEVQETKRLH. A helical transmembrane segment spans residues 153 to 173; it reads FLLFMALIITWFSFLILFMLI. Residues 174 to 206 lie on the Extracellular side of the membrane; sequence KISTPFWIESQTLPFHVSWPFQLHDPSKHPIAY. Residues 207–227 traverse the membrane as a helical segment; it reads IIIFVSQSTTMLYFLIWLGVV. Residues 228-290 are Cytoplasmic-facing; that stretch reads ENMGVSLFFE…TDRCNHIFNG (63 aa). A helical membrane pass occupies residues 291-311; the sequence is AFIMQMLINFLLVSLSLFEVL. Residues 312-316 are Extracellular-facing; the sequence is AAKKN. Residues 317-337 form a helical membrane-spanning segment; that stretch reads PQVAVEYMIIMLMTLGHLSFW. At 338–393 the chain is on the cytoplasmic side; the sequence is SKFGDMFSKESEQVALAVYEAYDPNVGSKSIHRQFCFFIQRAQKPLIMKASPFPPF. Residues 394 to 414 form a helical membrane-spanning segment; the sequence is NLENYMFILKQCYSILTILAN. Over 415 to 417 the chain is Extracellular; the sequence is TLE.

The protein belongs to the insect chemoreceptor superfamily. Heteromeric odorant receptor channel (TC 1.A.69) family. Or49a subfamily. As to quaternary structure, interacts with Orco. Complexes exist early in the endomembrane system in olfactory sensory neurons (OSNs), coupling these complexes to the conserved ciliary trafficking pathway. As to expression, expressed in olfactory sensory neurons in the antenna.

The protein resides in the cell membrane. Its function is as follows. Odorant receptor which mediates acceptance or avoidance behavior, depending on its substrates. The odorant receptor repertoire encodes a large collection of odor stimuli that vary widely in identity, intensity, and duration. May form a complex with Orco to form odorant-sensing units, providing sensitive and prolonged odorant signaling and calcium permeability. Involved in olfactory communication for modulating aggression through the sensing of the male-specific pheromone 11-cis-vaccenyl acetate (cVA). Although acute exposure to cVA elicites aggression through Or67d olfactory receptor neurons (ORNs), chronic cVA exposure reduces aggression through Or65a ORNs. Moreover, cVA leads to generalized learning with mated females. It is a major component of the male cuticular hydrocarbon profile, but it is not found on virgin females. During copulation, cVA is transferred to the female in ejaculate along with sperm and peptides that decrease her sexual receptivity. This is Odorant receptor 65a (Or65a) from Drosophila melanogaster (Fruit fly).